A 405-amino-acid chain; its full sequence is Argininosuccinate synthase (405 aa).

Residues 10 to 18 and alanine 37 each bind ATP; that span reads AYSGGLDTS. Residues tyrosine 88 and serine 93 each coordinate L-citrulline. Residue glycine 118 coordinates ATP. The L-aspartate site is built by threonine 120, asparagine 124, and aspartate 125. Position 124 (asparagine 124) interacts with L-citrulline. Positions 128, 179, 188, 264, and 276 each coordinate L-citrulline.

This sequence belongs to the argininosuccinate synthase family. Type 1 subfamily. As to quaternary structure, homotetramer.

Its subcellular location is the cytoplasm. It carries out the reaction L-citrulline + L-aspartate + ATP = 2-(N(omega)-L-arginino)succinate + AMP + diphosphate + H(+). It functions in the pathway amino-acid biosynthesis; L-arginine biosynthesis; L-arginine from L-ornithine and carbamoyl phosphate: step 2/3. The sequence is that of Argininosuccinate synthase from Pseudomonas fluorescens (strain Pf0-1).